The following is an 86-amino-acid chain: Insulin (86 aa).

Cystine bridges form between cysteine 7–cysteine 72, cysteine 19–cysteine 85, and cysteine 71–cysteine 76. A propeptide spans 33-63 (EAEDPQVGEVELGGGPGLGGLQPLALAGPQQ) (c peptide).

This sequence belongs to the insulin family. Heterodimer of a B chain and an A chain linked by two disulfide bonds.

It localises to the secreted. In terms of biological role, insulin decreases blood glucose concentration. It increases cell permeability to monosaccharides, amino acids and fatty acids. It accelerates glycolysis, the pentose phosphate cycle, and glycogen synthesis in liver. The chain is Insulin (INS) from Equus caballus (Horse).